The chain runs to 229 residues: Large ribosomal subunit protein uL1 (229 aa).

Belongs to the universal ribosomal protein uL1 family. In terms of assembly, part of the 50S ribosomal subunit.

Its function is as follows. Binds directly to 23S rRNA. The L1 stalk is quite mobile in the ribosome, and is involved in E site tRNA release. Functionally, protein L1 is also a translational repressor protein, it controls the translation of the L11 operon by binding to its mRNA. The protein is Large ribosomal subunit protein uL1 of Thermus thermophilus (strain ATCC BAA-163 / DSM 7039 / HB27).